The primary structure comprises 304 residues: Foldase protein PrsA (304 aa).

Positions M1 to A19 are cleaved as a signal peptide. C20 carries N-palmitoyl cysteine lipidation. A lipid anchor (S-diacylglycerol cysteine) is attached at C20. In terms of domain architecture, PpiC spans K140 to D231. Residues F285–Q304 form a disordered region. Low complexity predominate over residues Q292–Q304.

Belongs to the PrsA family.

Its subcellular location is the cell membrane. The enzyme catalyses [protein]-peptidylproline (omega=180) = [protein]-peptidylproline (omega=0). In terms of biological role, plays a major role in protein secretion by helping the post-translocational extracellular folding of several secreted proteins. The sequence is that of Foldase protein PrsA from Exiguobacterium sibiricum (strain DSM 17290 / CCUG 55495 / CIP 109462 / JCM 13490 / 255-15).